The sequence spans 160 residues: Transcriptional repressor NrdR (160 aa).

Polar residues predominate over residues 1 to 11 (MRCPSCSSLDT). Positions 1 to 20 (MRCPSCSSLDTQVKDSRPTE) are disordered. Residues 3–34 (CPSCSSLDTQVKDSRPTEDSSVIRRRRVCLAC) fold into a zinc finger. The region spanning 49–139 (LTVIKRNGRR…VYRNFREAKD (91 aa)) is the ATP-cone domain.

The protein belongs to the NrdR family. Zn(2+) is required as a cofactor.

Its function is as follows. Negatively regulates transcription of bacterial ribonucleotide reductase nrd genes and operons by binding to NrdR-boxes. The protein is Transcriptional repressor NrdR of Rhodopseudomonas palustris (strain BisA53).